The following is a 163-amino-acid chain: Adenosine 5'-monophosphoramidase HINT2 (163 aa).

The N-terminal 17 residues, 1-17 (MAAAVLLAVGLRAARRT), are a transit peptide targeting the mitochondrion. N6-succinyllysine is present on Lys45. The 109-residue stretch at 55 to 163 (IFSRILDRSL…GGRQLQWPPG (109 aa)) folds into the HIT domain. Residues Ser63 and Asp80 each coordinate AMP. An N6-acetyllysine modification is found at Lys119. N6-acetyllysine; alternate is present on Lys128. The residue at position 128 (Lys128) is an N6-succinyllysine; alternate. Asn136 contacts AMP. N6-acetyllysine is present on Lys139. Residues 142–145 (AQSV) and 149–151 (HIH) contribute to the AMP site. Positions 147–151 (HLHIH) match the Histidine triad motif motif. His149 acts as the Tele-AMP-histidine intermediate in catalysis.

The protein belongs to the HINT family.

It is found in the mitochondrion. It catalyses the reaction adenosine 5'-phosphoramidate + H2O = AMP + NH4(+). Functionally, exhibits adenosine 5'-monophosphoramidase activity, hydrolyzing purine nucleotide phosphoramidates with a single phosphate group such as adenosine 5'monophosphoramidate (AMP-NH2) to yield AMP and NH2. Hydrolyzes adenosine 5'-O-p-nitrophenylphosphoramidate (AMP-pNA). May be involved in steroid biosynthesis. May play a role in apoptosis. The protein is Adenosine 5'-monophosphoramidase HINT2 of Mus musculus (Mouse).